A 92-amino-acid polypeptide reads, in one-letter code: Small ribosomal subunit protein uS19 (92 aa).

Belongs to the universal ribosomal protein uS19 family.

In terms of biological role, protein S19 forms a complex with S13 that binds strongly to the 16S ribosomal RNA. The sequence is that of Small ribosomal subunit protein uS19 from Agrobacterium fabrum (strain C58 / ATCC 33970) (Agrobacterium tumefaciens (strain C58)).